A 973-amino-acid chain; its full sequence is Splicing regulator ARVCF (973 aa).

Residues 95–123 are disordered; that stretch reads VTVEEDPGTPTSHVSIVTSEDGTTRRTET. Residues Thr103 and Thr105 each carry the phosphothreonine modification. A compositionally biased stretch (polar residues) spans 103–115; it reads TPTSHVSIVTSED. Position 171 is an omega-N-methylarginine (Arg171). 2 disordered regions span residues 233 to 254 and 267 to 331; these read RREA…LPEH and RSLA…QPER. Ser268 carries the post-translational modification Phosphoserine. The segment covering 271-281 has biased composition (acidic residues); the sequence is ADDEGGPDLEP. A compositionally biased stretch (basic and acidic residues) spans 289–303; the sequence is RRPEYGRGLRARALE. A phosphoserine mark is found at Ser333, Ser336, Ser344, and Ser346. ARM repeat units follow at residues 349–388, 391–430, 434–468, 469–509, 527–566, and 576–623; these read STRK…HLCF, EGIK…NLSY, ADNK…VTGT, LWNL…NEDS, LRNV…DTDN, and MRNL…GKKA. Residues 593-623 are disordered; the sequence is YQEVEPGIPGSAATSQRRRKDDASCFGGKKA. Ser607 carries the phosphoserine modification. The short motif at 608-624 is the Nuclear localization signal element; that stretch reads QRRRKDDASCFGGKKAK. Thr637 bears the Phosphothreonine mark. ARM repeat units follow at residues 641–681, 694–733, 734–776, and 777–821; these read PKRT…AAGA, TYIR…NLSL, DQRN…AVLN, and TIHE…SHVL. The tract at residues 771–955 is required for interaction with RNA-binding proteins DDX5, HNRNPH2 and SRSF1 and with mRNAs; that stretch reads VVAVLNTIHE…VLGPGAPPFC (185 aa). The disordered stretch occupies residues 844 to 926; sequence FQSASTAKGP…KELLKGPGPA (83 aa). Position 865 is a phosphoserine (Ser865). Thr866 is modified (phosphothreonine). Positions 872 to 881 are enriched in basic and acidic residues; it reads KNLDGEKSTT.

Belongs to the beta-catenin family. As to quaternary structure, component of a ribonucleoprotein complex containing mRNAs and RNA-binding proteins including DDX5, HNRNPH2 and SRSF1 as well as ARVCF. Interacts (via the extreme C-terminus) with FRMPD2 (via the PDZ 2 domain). Interacts with CCDC85B. As to expression, expressed in optic nerve sheath envelope (at protein level). Expressed in heart (at protein level).

Its subcellular location is the cell junction. The protein localises to the adherens junction. It is found in the nucleus. The protein resides in the cytoplasm. Contributes to the regulation of alternative splicing of pre-mRNAs. This is Splicing regulator ARVCF from Rattus norvegicus (Rat).